The following is a 367-amino-acid chain: Testis-specific serine/threonine-protein kinase 1 (367 aa).

Residues tyrosine 12–methionine 272 form the Protein kinase domain. Residues leucine 18–valine 26 and lysine 41 each bind ATP. Aspartate 136 serves as the catalytic Proton acceptor. Threonine 174 is subject to Phosphothreonine. Residues alanine 276–glutamine 367 are disordered. The segment covering glycine 303–proline 314 has biased composition (basic and acidic residues).

The protein belongs to the protein kinase superfamily. CAMK Ser/Thr protein kinase family. Interacts with TSSK2. Interacts with HSP90; this interaction stabilizes TSSK1. Mg(2+) serves as cofactor. In terms of processing, autophosphorylated. Post-translationally, ubiquitinated; HSP90 activity negatively regulates ubiquitination and degradation. In terms of tissue distribution, testis-specific. Present in sperm (at protein level).

It is found in the cytoplasm. The protein localises to the cytoplasmic vesicle. The protein resides in the secretory vesicle. It localises to the acrosome. Its subcellular location is the cell projection. It is found in the cilium. The protein localises to the flagellum. The catalysed reaction is L-seryl-[protein] + ATP = O-phospho-L-seryl-[protein] + ADP + H(+). It carries out the reaction L-threonyl-[protein] + ATP = O-phospho-L-threonyl-[protein] + ADP + H(+). With respect to regulation, kinase activity is specifically inhibited by 2 classes of compounds: biphenyl compounds (1,1'-(biphenyl-4,4'-diyl)bis(2,2-dihydroxyethanone)) and 1,2,7-trialky-1H-imidazo[4,5-g]quinoxalin-6-one. Activated by phosphorylation on Thr-174 and potentially by autophosphorylation. Its function is as follows. Testis-specific serine/threonine-protein kinase required during spermatid development. Phosphorylates 'Ser-288' of TSKS. Involved in the late stages of spermatogenesis, during the reconstruction of the cytoplasm. During spermatogenesis, required for the transformation of a ring-shaped structure around the base of the flagellum originating from the chromatoid body. The polypeptide is Testis-specific serine/threonine-protein kinase 1 (TSSK1B) (Homo sapiens (Human)).